The primary structure comprises 343 residues: Allantoicase (343 aa).

The protein belongs to the allantoicase family.

The enzyme catalyses allantoate + H2O = (S)-ureidoglycolate + urea. Its pathway is nitrogen metabolism; (S)-allantoin degradation; (S)-ureidoglycolate from allantoate (aminidohydrolase route): step 1/1. Its function is as follows. Utilization of purines as secondary nitrogen sources, when primary sources are limiting. This Saccharomyces cerevisiae (strain ATCC 204508 / S288c) (Baker's yeast) protein is Allantoicase (DAL2).